A 111-amino-acid chain; its full sequence is Dormancy-associated protein 1 (111 aa).

The tract at residues 30–60 (KDDGASNQLMRSTSIPTTPTTPVTPTTPSSA) is disordered. Residues 41–59 (STSIPTTPTTPVTPTTPSS) show a composition bias toward low complexity.

It belongs to the DRM1/ARP family. As to expression, expressed in axilary buds and in non-growing stems and roots. Detected in sepals, stamens and carpels, but barely detected in petals or leaflets.

The polypeptide is Dormancy-associated protein 1 (Pisum sativum (Garden pea)).